The sequence spans 95 residues: Putative membrane protein insertion efficiency factor (95 aa).

Positions 72–95 are disordered; the sequence is FDPVPDAPTSPSPSSSCSCKGPHP. The segment covering 83–95 has biased composition (low complexity); it reads SPSSSCSCKGPHP.

It belongs to the UPF0161 family.

The protein resides in the cell inner membrane. Functionally, could be involved in insertion of integral membrane proteins into the membrane. This Xanthomonas axonopodis pv. citri (strain 306) protein is Putative membrane protein insertion efficiency factor.